Consider the following 207-residue polypeptide: MSPLLRRLLLVALLQLACTQAPVSQFDGPSHQKKVVSWIDVYARATCQPREVVVPLSMELMGNVVKQLVPSCVTVQRCGGCCPDDGLECVPIGQHQVRMQILMIQYPSSQLGEMSLEEHSQCECRPKRKESAVKPDRVAIPHHRPQPRSVLSWDSAPGASSPADIIHPTPAPGPSAHAAPSAVSALIPGPAVAAADAAASSIAKGGA.

The first 21 residues, 1–21 (MSPLLRRLLLVALLQLACTQA), serve as a signal peptide directing secretion. 2 cysteine pairs are disulfide-bonded: Cys78/Cys122 and Cys82/Cys124. Positions 140–182 (IPHHRPQPRSVLSWDSAPGASSPADIIHPTPAPGPSAHAAPSA) are disordered.

This sequence belongs to the PDGF/VEGF growth factor family. As to quaternary structure, homodimer; disulfide-linked. Can also form heterodimer with VEGF.

Its subcellular location is the secreted. Functionally, growth factor for endothelial cells. VEGF-B167 binds heparin and neuropilin-1 whereas the binding to neuropilin-1 of VEGF-B186 is regulated by proteolysis. This chain is Vascular endothelial growth factor B (Vegfb), found in Rattus norvegicus (Rat).